The sequence spans 129 residues: Small ribosomal subunit protein uS11 (129 aa).

The protein belongs to the universal ribosomal protein uS11 family. In terms of assembly, part of the 30S ribosomal subunit. Interacts with proteins S7 and S18. Binds to IF-3.

Functionally, located on the platform of the 30S subunit, it bridges several disparate RNA helices of the 16S rRNA. Forms part of the Shine-Dalgarno cleft in the 70S ribosome. This is Small ribosomal subunit protein uS11 from Bacillus cytotoxicus (strain DSM 22905 / CIP 110041 / 391-98 / NVH 391-98).